The following is a 205-amino-acid chain: Small ribosomal subunit protein uS4 (205 aa).

The tract at residues P26–D47 is disordered. In terms of domain architecture, S4 RNA-binding spans R94–L154.

Belongs to the universal ribosomal protein uS4 family. As to quaternary structure, part of the 30S ribosomal subunit. Contacts protein S5. The interaction surface between S4 and S5 is involved in control of translational fidelity.

One of the primary rRNA binding proteins, it binds directly to 16S rRNA where it nucleates assembly of the body of the 30S subunit. In terms of biological role, with S5 and S12 plays an important role in translational accuracy. The polypeptide is Small ribosomal subunit protein uS4 (Gluconacetobacter diazotrophicus (strain ATCC 49037 / DSM 5601 / CCUG 37298 / CIP 103539 / LMG 7603 / PAl5)).